The following is a 101-amino-acid chain: Large ribosomal subunit protein eL43 (101 aa).

The segment at 40 to 62 (CPSCRSLVRLKRLAFGIWQCPKC) adopts a C4-type zinc-finger fold.

This sequence belongs to the eukaryotic ribosomal protein eL43 family. Zn(2+) serves as cofactor.

In Pyrobaculum islandicum (strain DSM 4184 / JCM 9189 / GEO3), this protein is Large ribosomal subunit protein eL43.